A 447-amino-acid polypeptide reads, in one-letter code: Sensor protein VanSB (447 aa).

Transmembrane regions (helical) follow at residues 10-30 (VFSY…TLFA) and 137-155 (GIVM…AYIF). The HAMP domain occupies 157-208 (RQMTTPIKALADSANKMANLKEVPPPLERKDELGALAHDMHSMYIRLKETIA). Positions 230 to 445 (AASHELKTPI…LFWLDLPPTS (216 aa)) constitute a Histidine kinase domain. His-233 is modified (phosphohistidine; by autocatalysis).

It is found in the cell membrane. The catalysed reaction is ATP + protein L-histidine = ADP + protein N-phospho-L-histidine.. In terms of biological role, member of the two-component regulatory system VanSB/VanRB. Activates the transcription of vanSB, vanYB and vanW in response to vancomycin which results in vancomycin resistance. VanSB may activate VanRB by phosphorylation. May also act as a phospho-VanRB phosphatase. The protein is Sensor protein VanSB (vanSB) of Enterococcus faecalis (strain ATCC 700802 / V583).